A 338-amino-acid chain; its full sequence is (2Z,6E)-hedycaryol synthase (338 aa).

Mg(2+)-binding residues include aspartate 82 and glutamate 87. The DDXXXE motif motif lies at 82-87 (DDQIDE). A substrate-binding site is contributed by arginine 175. Mg(2+) is bound by residues asparagine 221 and serine 225. Residues 221 to 229 (NDVFSVERE) carry the NXXXSXXXE motif motif. Arginine 228 contacts substrate. Mg(2+) is bound at residue glutamate 229.

It belongs to the terpene synthase family. As to quaternary structure, homodimer. It depends on Mg(2+) as a cofactor.

The enzyme catalyses (2E,6E)-farnesyl diphosphate + H2O = (2Z,6E)-hedycaryol + diphosphate. Its pathway is secondary metabolite biosynthesis; terpenoid biosynthesis. Catalyzes the conversion of (2E,6E)-farnesyl diphosphate (FPP) into (2Z,6E)-hedycaryol via a 1,11-cyclization. This chain is (2Z,6E)-hedycaryol synthase, found in Kitasatospora setae (strain ATCC 33774 / DSM 43861 / JCM 3304 / KCC A-0304 / NBRC 14216 / KM-6054) (Streptomyces setae).